The chain runs to 210 residues: Methylthioribulose-1-phosphate dehydratase (210 aa).

Residues histidine 94 and histidine 96 each contribute to the Zn(2+) site.

Belongs to the aldolase class II family. MtnB subfamily. Zn(2+) is required as a cofactor.

The catalysed reaction is 5-(methylsulfanyl)-D-ribulose 1-phosphate = 5-methylsulfanyl-2,3-dioxopentyl phosphate + H2O. It functions in the pathway amino-acid biosynthesis; L-methionine biosynthesis via salvage pathway; L-methionine from S-methyl-5-thio-alpha-D-ribose 1-phosphate: step 2/6. Functionally, catalyzes the dehydration of methylthioribulose-1-phosphate (MTRu-1-P) into 2,3-diketo-5-methylthiopentyl-1-phosphate (DK-MTP-1-P). The polypeptide is Methylthioribulose-1-phosphate dehydratase (Yersinia enterocolitica serotype O:8 / biotype 1B (strain NCTC 13174 / 8081)).